Consider the following 393-residue polypeptide: Homoserine O-succinyltransferase (393 aa).

One can recognise an AB hydrolase-1 domain in the interval 62 to 372 (NAVLVCHALN…PHGHDAFLLD (311 aa)). Ser168 (nucleophile) is an active-site residue. A substrate-binding site is contributed by Arg238. Active-site residues include Asp333 and His366. Asp367 is a substrate binding site.

This sequence belongs to the AB hydrolase superfamily. MetX family. As to quaternary structure, homodimer.

It localises to the cytoplasm. It carries out the reaction L-homoserine + succinyl-CoA = O-succinyl-L-homoserine + CoA. It functions in the pathway amino-acid biosynthesis; L-methionine biosynthesis via de novo pathway; O-succinyl-L-homoserine from L-homoserine: step 1/1. In terms of biological role, transfers a succinyl group from succinyl-CoA to L-homoserine, forming succinyl-L-homoserine. This chain is Homoserine O-succinyltransferase, found in Cupriavidus taiwanensis (strain DSM 17343 / BCRC 17206 / CCUG 44338 / CIP 107171 / LMG 19424 / R1) (Ralstonia taiwanensis (strain LMG 19424)).